The primary structure comprises 417 residues: Voltage-gated ClC-type chloride channel ClcB (417 aa).

11 helical membrane passes run 5–25 (LLIA…FRHA), 54–74 (LITP…WQKM), 146–166 (LWIA…PLAG), 168–188 (LFIA…PVVI), 190–210 (AVVA…LYTV), 222–242 (AMII…MWLM), 258–278 (WQLA…PAVW), 288–308 (FLLS…KLLA), 316–336 (GAPG…GMLY), 339–359 (MWGF…LTGM), and 380–400 (MTGE…ASVL).

The protein belongs to the chloride channel (TC 2.A.49) family. ClcB subfamily.

The protein resides in the cell inner membrane. Its function is as follows. Probably acts as an electrical shunt for an outwardly-directed proton pump that is linked to amino acid decarboxylation, as part of the extreme acid resistance (XAR) response. This chain is Voltage-gated ClC-type chloride channel ClcB, found in Citrobacter koseri (strain ATCC BAA-895 / CDC 4225-83 / SGSC4696).